A 224-amino-acid chain; its full sequence is Protein FAM3D (224 aa).

An N-terminal signal peptide occupies residues 1-25 (MRVSGVLRLLALIFAIVTTWMFIRS). 2 cysteine pairs are disulfide-bonded: Cys-55–Cys-83 and Cys-61–Cys-218. The 159-residue stretch at 64 to 222 (NYFAFKICSG…LEMEGCMPPK (159 aa)) folds into the GG-type lectin domain. Asn-107 carries N-linked (GlcNAc...) asparagine glycosylation.

Belongs to the FAM3 family. Abundantly expressed in placenta and weakly expressed in small intestine.

It is found in the secreted. The sequence is that of Protein FAM3D (FAM3D) from Homo sapiens (Human).